The primary structure comprises 151 residues: UPF0735 ACT domain-containing protein SERP1207 (151 aa).

An ACT domain is found at 74 to 149 (TLILYVNDIV…HVTKVDLISM (76 aa)).

This sequence belongs to the UPF0735 family.

The sequence is that of UPF0735 ACT domain-containing protein SERP1207 from Staphylococcus epidermidis (strain ATCC 35984 / DSM 28319 / BCRC 17069 / CCUG 31568 / BM 3577 / RP62A).